A 242-amino-acid chain; its full sequence is GATA zinc finger domain-containing protein 1 (242 aa).

Residues 9–33 (CAVCKTQSSSMWKKGNQGEILCNGC) form a GATA-type zinc finger. A disordered region spans residues 44–85 (GASASSTIQQNNGGGKQSKQEIHRRSARLRSTKYKAPASEKK). Over residues 45-54 (ASASSTIQQN) the composition is skewed to low complexity.

Its subcellular location is the nucleus. Functionally, component of some chromatin complex recruited to chromatin sites methylated 'Lys-4' of histone H3 (H3K4me), with a preference for trimethylated form (H3K4me3). In Danio rerio (Zebrafish), this protein is GATA zinc finger domain-containing protein 1 (gatad1).